The chain runs to 688 residues: G-protein coupled receptor-associated protein LMBRD2 (688 aa).

The Extracellular segment spans residues 1-3 (MSG). The chain crosses the membrane as a helical span at residues 4 to 21 (AALGLEIVFVFFLALFLL). Over 22 to 32 (HRYGDFKKQHR) the chain is Cytoplasmic. The chain crosses the membrane as a helical span at residues 33 to 53 (LVIIATLLAWYLCFLIVFILP). At 54 to 99 (LDVSTTIYNRCKLAVNSSPAESNSSFVTLAPSKQQCFKPWSYIPNG) the chain is on the extracellular side. The N-linked (GlcNAc...) asparagine glycan is linked to asparagine 76. The helical transmembrane segment at 100 to 120 (IMPIFWRVVYWTSQFLTWILL) threads the bilayer. At 121–144 (PFMQSYARSGGFSITGKIKTALIE) the chain is on the cytoplasmic side. A helical membrane pass occupies residues 145–165 (NAIYYGTYLLIFGAFLIYVAV). Over 166 to 180 (NPKFNLQWNQLQTIG) the chain is Extracellular. Residues 181 to 201 (IAAANTWGLFLLVLLLGYGLV) traverse the membrane as a helical segment. Residues 202–381 (EIPRSHWNGA…ECLLRPWFYR (180 aa)) are Cytoplasmic-facing. Residues 222-254 (FKAAKLMTEKADAEENLEDIMEEVRKVSESIKY) adopt a coiled-coil conformation. Residues 382 to 402 (VLAVVLAAFSVIVVWSECTFF) traverse the membrane as a helical segment. Over 403-426 (STRPVLSLVAVFIQLAEKTYNYIY) the chain is Extracellular. A helical transmembrane segment spans residues 427-447 (IEMACFLTIFFLSICVYSTVF). At 448-467 (RIRVFNYYYLASHHQTDAYS) the chain is on the cytoplasmic side. Residues 468–488 (LLFSGMLFCRLTPPLCLNFLG) form a helical membrane-spanning segment. The Extracellular segment spans residues 489–515 (LTHMDATISHTDAQPTAYTSIMGSMKV). A helical membrane pass occupies residues 516–536 (LSFIADGFYIYYPMLVVILCI). The Cytoplasmic segment spans residues 537-688 (ATYFSLGTRC…MSRSRIFEDV (152 aa)). The span at 600–617 (REDSTRNRVVHTEQKESS) shows a compositional bias: basic and acidic residues. A disordered region spans residues 600 to 673 (REDSTRNRVV…ESDSGRYQPG (74 aa)). Residues 618–634 (FSETNTNRPLSKYTRTN) show a composition bias toward polar residues. The segment covering 635-644 (GRTERDRIEL) has biased composition (basic and acidic residues).

Belongs to the LIMR family.

It localises to the cell membrane. Functionally, may associate with G-protein coupled receptors and regulate downstream signaling pathways. The sequence is that of G-protein coupled receptor-associated protein LMBRD2 from Gallus gallus (Chicken).